We begin with the raw amino-acid sequence, 36 residues long: DNA binding protein ORF8 (36 aa).

This sequence belongs to the microviridae J protein family.

Its subcellular location is the virion. The protein resides in the host cytoplasm. Its function is as follows. Mediates ssDNA packaging into virion, it locates to the internal surface of the capsid. Additionally, plays a role in viral attachment to the host cell. The protein is DNA binding protein ORF8 of Chlamydia phage 1 (Bacteriophage Chp1).